Consider the following 265-residue polypeptide: Glutamate racemase (265 aa).

Residues 12 to 13 (DS) and 44 to 45 (YG) contribute to the substrate site. Cys-75 acts as the Proton donor/acceptor in catalysis. Position 76–77 (76–77 (NT)) interacts with substrate. The Proton donor/acceptor role is filled by Cys-186. 187–188 (TH) is a binding site for substrate.

This sequence belongs to the aspartate/glutamate racemases family.

The enzyme catalyses L-glutamate = D-glutamate. It functions in the pathway cell wall biogenesis; peptidoglycan biosynthesis. Its function is as follows. Provides the (R)-glutamate required for cell wall biosynthesis. The sequence is that of Glutamate racemase from Pseudomonas aeruginosa (strain UCBPP-PA14).